The chain runs to 337 residues: MNNLIKFIAALPKAELHLHIEGSLEPELMFELAKRNKVTLPFPDVESVKAAYNFNNLQEFLDIYYQGTNVLKTEEDFCDLAMAYFYRAHRDNVLHSEIFFDPQSHTERGIPFNVVMNGLLAAITKAEAELGMSVQLIMCFLRHLDEESAFATLRMAEPFLDKIAGVGLDSSEVGNPPSKFRHVFAEARQKGLKLVAHAGEEGDASYIKEALDILNIDRIDHGNRITEDRLLMTRAARSAIALTICPLSNQKLQVVPDLRNHPLPYLLRQGLRVTINSDDPAYFGGYVNDNYKALAEYCGLKAADFVEIARNSFLGSFLPDQTVAAYLDVLDKYVDSF.

Zn(2+)-binding residues include histidine 17, histidine 19, and histidine 197. The active-site Proton donor is the glutamate 200. Residue aspartate 278 coordinates Zn(2+). Substrate is bound at residue aspartate 279.

This sequence belongs to the metallo-dependent hydrolases superfamily. Adenosine and AMP deaminases family. Adenine deaminase type 2 subfamily. The cofactor is Zn(2+).

It carries out the reaction adenine + H2O + H(+) = hypoxanthine + NH4(+). In terms of biological role, catalyzes the hydrolytic deamination of adenine to hypoxanthine. Plays an important role in the purine salvage pathway and in nitrogen catabolism. The sequence is that of Adenine deaminase from Zymomonas mobilis subsp. mobilis (strain ATCC 31821 / ZM4 / CP4).